The chain runs to 254 residues: GTP cyclohydrolase 1 type 2 homolog (254 aa).

5 residues coordinate a divalent metal cation: His-68, His-69, Asp-106, His-222, and Glu-226.

It belongs to the GTP cyclohydrolase I type 2/NIF3 family. Homohexamer.

The sequence is that of GTP cyclohydrolase 1 type 2 homolog from Allochromatium vinosum (strain ATCC 17899 / DSM 180 / NBRC 103801 / NCIMB 10441 / D) (Chromatium vinosum).